The chain runs to 716 residues: 1,4-alpha-glucan branching enzyme GlgB (716 aa).

Asp399 serves as the catalytic Nucleophile. Glu452 serves as the catalytic Proton donor.

It belongs to the glycosyl hydrolase 13 family. GlgB subfamily. As to quaternary structure, monomer.

It catalyses the reaction Transfers a segment of a (1-&gt;4)-alpha-D-glucan chain to a primary hydroxy group in a similar glucan chain.. Its pathway is glycan biosynthesis; glycogen biosynthesis. Its function is as follows. Catalyzes the formation of the alpha-1,6-glucosidic linkages in glycogen by scission of a 1,4-alpha-linked oligosaccharide from growing alpha-1,4-glucan chains and the subsequent attachment of the oligosaccharide to the alpha-1,6 position. The polypeptide is 1,4-alpha-glucan branching enzyme GlgB (Rhodopseudomonas palustris (strain ATCC BAA-98 / CGA009)).